A 278-amino-acid chain; its full sequence is Alcohol dehydrogenase-related 31 kDa protein (278 aa).

11 to 34 (YVADCGGIALETSKVLMTKNIAKL) provides a ligand contact to NAD(+). S139 contacts substrate. Y152 serves as the catalytic Proton acceptor.

Belongs to the short-chain dehydrogenases/reductases (SDR) family.

This chain is Alcohol dehydrogenase-related 31 kDa protein (Adhr), found in Drosophila pseudoobscura pseudoobscura (Fruit fly).